The following is a 104-amino-acid chain: ATP-dependent Clp protease adapter protein ClpS (104 aa).

Belongs to the ClpS family. Binds to the N-terminal domain of the chaperone ClpA.

Functionally, involved in the modulation of the specificity of the ClpAP-mediated ATP-dependent protein degradation. This chain is ATP-dependent Clp protease adapter protein ClpS, found in Bordetella bronchiseptica (strain ATCC BAA-588 / NCTC 13252 / RB50) (Alcaligenes bronchisepticus).